The sequence spans 574 residues: MKIKEIIPVALGEKTPDLLIKNVKLLNVYTGNIEKTNIAILKKRIAGIGNEYNVGKEIFNAKNLYAIPGLIDAHVHIESSMLSPIEFAKMILPNGTTTIIADPHEIANVLGVEGINYMIKATEGIPLNVYFAIPSAVPATFLETSGAILGAEDMVSLLEKYPFRLIALGEVMNYPGVLNCDRELITKIEILRHKYKKIDGHAPGLSGKQLNAYIDAFVRSDHECETKSEALEKLSKGMHIFIREGTAARNLRSLIPAVNILNHFFFSFCTDDRDPEDIYKRGHINQIVKEAIGQGLDPVIAIRMATINTAKYFNLRSMGAISPGYKSDIVLVDNLYDFNILYVIKDSKFVVKDGKIDLKIESVFKDVPTTIGKINITKNYSLKVKNRNKKIRIISIKKFSLITEESIVSPKVSKNEIISDVENDIVKIAVFDRHNASGFSIGFVKGTGIKNGAIATTIGHDSHNLAVLGTNDKDMELAIKRILEINGGIVVIKDKKVISELSLPIAGLMSDETYNTVIKKLQHLKKSIEKLGTKNDVLMNIHFLQLAVIPKLKITDKGLIDVENQKIVDLFVEV.

This sequence belongs to the metallo-dependent hydrolases superfamily. Adenine deaminase family. Mn(2+) serves as cofactor.

The enzyme catalyses adenine + H2O + H(+) = hypoxanthine + NH4(+). This chain is Adenine deaminase, found in Thermosipho melanesiensis (strain DSM 12029 / CIP 104789 / BI429).